Consider the following 621-residue polypeptide: Chaperone protein HtpG (621 aa).

The segment at 1–328 (MTQEKKKFDA…SEDLPLNISR (328 aa)) is a; substrate-binding. The interval 329–544 (ESLQHNSVLE…DSAMDIRMER (216 aa)) is b. The segment at 475–495 (SDIDVEQTTSQSEDKNTHSKK) is disordered. Basic and acidic residues predominate over residues 486–495 (SEDKNTHSKK). A c region spans residues 545-621 (FLIEQKQITA…LNDIVQKAIL (77 aa)).

This sequence belongs to the heat shock protein 90 family. In terms of assembly, homodimer.

It is found in the cytoplasm. Functionally, molecular chaperone. Has ATPase activity. The polypeptide is Chaperone protein HtpG (Rickettsia akari (strain Hartford)).